The following is a 424-amino-acid chain: MNPDNTIAVITETIPIGMQFDKVYLSTFNMWREILSNTTKTLDISSFYWSLSDEVGTNFGTIILNKIVQLPKRGVRVRVAVNKSNKPLKDVERLQMAGVEVRYIDITNILGGVLHTKFWISDNTHIYLGSANMDWRSLTQVKELGIAIFNNRNLAADLTQIFEVYWYLGVNNLPYNWKNFYPSYYNTDHPLSINVSGVPHSVFIASAPQQLCTMERTNDLTALLSCIRNASKFVYVSVMNFIPIIYSKAGNILFWPYIEDELRRAAIDRQVSVKLLISCWQRSSFIMRNFLRSIAMLKSKNINIEVKLFIVPDADPPIPYSRVNHAKYMVTDKTAYIGTSNWTGNYFTDTCGASINITPDDGLGLRQQLEDIFMRDWNSKYSYELYDTSPTKRCRLLKNMKQCTNDIYCDEIQPEKEIPEYSLE.

PLD phosphodiesterase domains are found at residues 110–137 (LGGVLHTKFWISDNTHIYLGSANMDWRS) and 320–346 (YSRVNHAKYMVTDKTAYIGTSNWTGNY).

Belongs to the orthopoxvirus OPG042 family.

Its subcellular location is the virion. Functionally, DNA nicking enzyme that cleaves extruded cruciform DNA at its tip. Probably nicks viral hairpins. The chain is Virion nicking-joining enzyme (OPG042) from Vaccinia virus (strain Western Reserve) (VACV).